The primary structure comprises 427 residues: D-inositol 3-phosphate glycosyltransferase (427 aa).

Histidine 12 lines the 1D-myo-inositol 3-phosphate pocket. Residues 18–19 (QP) and glycine 26 contribute to the UDP-N-acetyl-alpha-D-glucosamine site. 1D-myo-inositol 3-phosphate is bound by residues 23–28 (DAGGMN), lysine 81, tyrosine 113, threonine 137, and arginine 157. UDP-N-acetyl-alpha-D-glucosamine contacts are provided by arginine 234, lysine 239, and arginine 297. Positions 306, 307, and 309 each coordinate Mg(2+). Positions 319 and 327 each coordinate UDP-N-acetyl-alpha-D-glucosamine. A Mg(2+)-binding site is contributed by threonine 333.

Belongs to the glycosyltransferase group 1 family. MshA subfamily. In terms of assembly, homodimer.

It carries out the reaction 1D-myo-inositol 3-phosphate + UDP-N-acetyl-alpha-D-glucosamine = 1D-myo-inositol 2-acetamido-2-deoxy-alpha-D-glucopyranoside 3-phosphate + UDP + H(+). Functionally, catalyzes the transfer of a N-acetyl-glucosamine moiety to 1D-myo-inositol 3-phosphate to produce 1D-myo-inositol 2-acetamido-2-deoxy-glucopyranoside 3-phosphate in the mycothiol biosynthesis pathway. This is D-inositol 3-phosphate glycosyltransferase from Corynebacterium diphtheriae (strain ATCC 700971 / NCTC 13129 / Biotype gravis).